Here is a 333-residue protein sequence, read N- to C-terminus: Protoheme IX farnesyltransferase (333 aa).

Transmembrane regions (helical) follow at residues 31 to 51, 52 to 72, 115 to 135, 152 to 172, 178 to 198, 223 to 243, 244 to 264, and 303 to 323; these read VMSL…APIH, PVLA…SGAL, MFLG…TIVF, IVIG…AATG, AWLM…ALSL, KQIL…VLTG, LGGP…LLLA, and LFAF…GEAV.

It belongs to the UbiA prenyltransferase family. Protoheme IX farnesyltransferase subfamily.

Its subcellular location is the cell inner membrane. The catalysed reaction is heme b + (2E,6E)-farnesyl diphosphate + H2O = Fe(II)-heme o + diphosphate. It functions in the pathway porphyrin-containing compound metabolism; heme O biosynthesis; heme O from protoheme: step 1/1. In terms of biological role, converts heme B (protoheme IX) to heme O by substitution of the vinyl group on carbon 2 of heme B porphyrin ring with a hydroxyethyl farnesyl side group. This chain is Protoheme IX farnesyltransferase, found in Caulobacter vibrioides (strain ATCC 19089 / CIP 103742 / CB 15) (Caulobacter crescentus).